A 526-amino-acid polypeptide reads, in one-letter code: Butyrophilin subfamily 1 member A1 (526 aa).

Positions 1-26 (MAVFPSSGLPRCLLTLILLQLPKLDS) are cleaved as a signal peptide. 2 consecutive Ig-like V-type domains span residues 27–138 (APFD…ALVH) and 148–234 (PHIS…VEIS). The Extracellular portion of the chain corresponds to 27–242 (APFDVIGPPE…ISIPASSLPR (216 aa)). 2 cysteine pairs are disulfide-bonded: Cys50–Cys124 and Cys164–Cys218. N-linked (GlcNAc...) asparagine glycans are attached at residues Asn55 and Asn215. A helical transmembrane segment spans residues 243 to 269 (LTPWIVAVAVILMVLGLLTIGSIFFTW). Residues 270–526 (RLYNERPRER…IPTQPSQGAP (257 aa)) are Cytoplasmic-facing. The region spanning 285–479 (SKERLLEELK…LTICPIADGP (195 aa)) is the B30.2/SPRY domain. The disordered stretch occupies residues 495–526 (IPLSPMGEDSAPRDADTLHSKLIPTQPSQGAP). Positions 504–513 (SAPRDADTLH) are enriched in basic and acidic residues. Over residues 517–526 (IPTQPSQGAP) the composition is skewed to polar residues.

Belongs to the immunoglobulin superfamily. BTN/MOG family. As to quaternary structure, seems to associate with xanthine dehydrogenase/oxidase. In terms of processing, N-glycosylated.

It localises to the membrane. The protein resides in the secreted. Functionally, may function in the secretion of milk-fat droplets. May act as a specific membrane-associated receptor for the association of cytoplasmic droplets with the apical plasma membrane. Inhibits the proliferation of CD4 and CD8 T-cells activated by anti-CD3 antibodies, T-cell metabolism and IL2 and IFNG secretion. This is Butyrophilin subfamily 1 member A1 (BTN1A1) from Homo sapiens (Human).